Here is a 32-residue protein sequence, read N- to C-terminus: Alpha-amylase inhibitor AAI (32 aa).

3 cysteine pairs are disulfide-bonded: cysteine 1–cysteine 18, cysteine 8–cysteine 23, and cysteine 17–cysteine 31.

In terms of tissue distribution, endosperm.

In terms of biological role, alpha-amylase inhibitor. It is active against alpha-amylases from Tribolium castaneum and Prostephanus truncatus larvae. This is Alpha-amylase inhibitor AAI (AAI) from Amaranthus hypochondriacus (Prince-of-Wales feather).